The primary structure comprises 37 residues: MKVRASIKRICKDCKIIKRHGVNRVICINFKHKQRQG.

Belongs to the bacterial ribosomal protein bL36 family.

This Mycoplasma sp protein is Large ribosomal subunit protein bL36 (rpmJ).